Consider the following 609-residue polypeptide: Probable translation initiation factor IF-2 (609 aa).

The tr-type G domain occupies 12-230 (LRQPIVAVLG…VLAGLAQRYM (219 aa)). A G1 region spans residues 21-28 (GHVDHGKT). Residue 21 to 28 (GHVDHGKT) participates in GTP binding. Positions 46 to 50 (QITQH) are G2. The interval 86–89 (DTPG) is G3. GTP is bound by residues 86–90 (DTPGH) and 140–143 (NKID). Positions 140–143 (NKID) are G4. The G5 stretch occupies residues 208–210 (SAK).

This sequence belongs to the TRAFAC class translation factor GTPase superfamily. Classic translation factor GTPase family. IF-2 subfamily.

Function in general translation initiation by promoting the binding of the formylmethionine-tRNA to ribosomes. Seems to function along with eIF-2. This Ignicoccus hospitalis (strain KIN4/I / DSM 18386 / JCM 14125) protein is Probable translation initiation factor IF-2.